Here is a 275-residue protein sequence, read N- to C-terminus: Elongation factor Ts (275 aa).

The involved in Mg(2+) ion dislocation from EF-Tu stretch occupies residues 80-83 (TDFV).

Belongs to the EF-Ts family.

It is found in the cytoplasm. Associates with the EF-Tu.GDP complex and induces the exchange of GDP to GTP. It remains bound to the aminoacyl-tRNA.EF-Tu.GTP complex up to the GTP hydrolysis stage on the ribosome. This chain is Elongation factor Ts, found in Clavibacter sepedonicus (Clavibacter michiganensis subsp. sepedonicus).